Consider the following 637-residue polypeptide: Chaperone protein HtpG (637 aa).

Residues 1–335 (MQGTVNSERL…SSDLPLNISR (335 aa)) form an a; substrate-binding region. The tract at residues 336 to 559 (ETLQNNKIIE…DGSMDIRMER (224 aa)) is b. The tract at residues 560-637 (FLREQKQLNY…RMNNVLSQIN (78 aa)) is c.

Belongs to the heat shock protein 90 family. In terms of assembly, homodimer.

Its subcellular location is the cytoplasm. In terms of biological role, molecular chaperone. Has ATPase activity. The protein is Chaperone protein HtpG of Ehrlichia ruminantium (strain Welgevonden).